The primary structure comprises 204 residues: Large ribosomal subunit protein uL13 (204 aa).

The protein belongs to the universal ribosomal protein uL13 family.

This is Large ribosomal subunit protein uL13 (RpL13A) from Choristoneura parallela (Spotted fireworm moth).